A 1116-amino-acid chain; its full sequence is Protein STICHEL-like 1 (1116 aa).

Disordered stretches follow at residues 95–138 (RTSS…LEET) and 225–244 (KFLRGTSKREDSSHTCNSTP). The segment covering 115–124 (NDDDDDDDDV) has biased composition (acidic residues). Short sequence motifs (PEST) lie at residues 257-282 (RNPSTVGSWEDGDDELDDDNLDFKGR) and 402-422 (KSQDGEREEEEEGGSTPESIQ). 463 to 470 (GPRGTGKT) contacts ATP. Residues cysteine 482, cysteine 492, cysteine 495, and cysteine 498 each coordinate Zn(2+). The stretch at 726–760 (EAFLDRRNLTEADLERLKHALKLLSEAEKQLRVST) forms a coiled coil. Residues 777–798 (PSPGTTHTGSSRRQSSRATEES) are disordered. The segment covering 778–793 (SPGTTHTGSSRRQSSR) has biased composition (polar residues).

It belongs to the DnaX/STICHEL family.

The chain is Protein STICHEL-like 1 from Arabidopsis thaliana (Mouse-ear cress).